Reading from the N-terminus, the 453-residue chain is MARKAVSRKRKAPALPGAGSDAQDPQFGWDHSLHKRKRLPPVKRSLVYYLKNREVRLQNETSYSRVLHGYAAQQLPSLLKEREFHLGTLNKVFASQWLNHRQVVCGTKCNTLFVVDVQTSQITKIPILKDREPGCVTQQGCGIHAIELNPSRTLLATGGDNPNSLAIYRLPTLDPVCVGDDGHKDWIFSIAWISDTMAVSGSRDGSMGLWEVTDDVLTKSDARHNVSRVPVYSHITHKALKDIPKEDTNPDNCKVRALAFNNKNKELGAVSLDGYFHLWKTENTLSKLLSTKLPYCRENVCLAYGNEWSVYAVGSQAHVSFLDPRQPSYNVKSVCSRERGSGIRSVSFYEHIITVGTGQGSLLFYDIRAQRFLEEKLSACYGSKPKLAGENLKLTTGKGWLNHDETWRNYFSDIDFFPNAVYTHCYDSSGTKLFVAGGPLPSGLHGNYAGLWS.

Residues 1–12 (MARKAVSRKRKA) show a composition bias toward basic residues. The disordered stretch occupies residues 1-27 (MARKAVSRKRKAPALPGAGSDAQDPQF). Residues 1-38 (MARKAVSRKRKAPALPGAGSDAQDPQFGWDHSLHKRKR) form a required for nuclear location and interaction with MOV10 region. WD repeat units follow at residues 138–178 (QQGC…PVCV), 182–220 (GHKDWIFSIAWISDTMAVSGSRDGSMGLWEVTDDVLTKS), 250–289 (PDNCKVRALAFNNKNKELGAVSLDGYFHLWKTENTLSKLL), and 338–375 (ERGSGIRSVSFYEHIITVGTGQGSLLFYDIRAQRFLEE).

The protein belongs to the WD repeat DCAF12 family. Component of the DCX(DCAF12) E3 ubiquitin ligase complex, at least composed of CUL4 (CUL4A or CUL4B), DDB1, DCAF12 and RBX1.

Its subcellular location is the cytoplasm. It localises to the cytoskeleton. It is found in the microtubule organizing center. The protein localises to the centrosome. The protein resides in the nucleus. It functions in the pathway protein modification; protein ubiquitination. In terms of biological role, substrate-recognition component of a DCX (DDB1-CUL4-X-box) E3 ubiquitin-protein ligase complex of the DesCEND (destruction via C-end degrons) pathway, which recognizes a C-degron located at the extreme C terminus of target proteins, leading to their ubiquitination and degradation. The C-degron recognized by the DesCEND pathway is usually a motif of less than ten residues and can be present in full-length proteins, truncated proteins or proteolytically cleaved forms. The DCX(DCAF12) complex specifically recognizes proteins with a diglutamate (Glu-Glu) at the C-terminus, such as MAGEA3, MAGEA6 and CCT5, leading to their ubiquitination and degradation. Ubiquitination of MAGEA3, MAGEA6 by DCX(DCAF12) complex is required for starvation-induced autophagy. Also directly recognizes the C-terminal glutamate-leucine (Glu-Leu) degron as an alternative degron in proteins such as MOV10, leading to their ubiquitination and degradation. Controls the protein level of MOV10 during spermatogenesis and in T cells, especially after their activation. In Bos taurus (Bovine), this protein is DDB1- and CUL4-associated factor 12 (DCAF12).